Consider the following 430-residue polypeptide: Tol-Pal system protein TolB (430 aa).

Residues 1 to 21 (MKQAFRVALGFLVLWASVLHA) form the signal peptide.

It belongs to the TolB family. As to quaternary structure, the Tol-Pal system is composed of five core proteins: the inner membrane proteins TolA, TolQ and TolR, the periplasmic protein TolB and the outer membrane protein Pal. They form a network linking the inner and outer membranes and the peptidoglycan layer.

Its subcellular location is the periplasm. Functionally, part of the Tol-Pal system, which plays a role in outer membrane invagination during cell division and is important for maintaining outer membrane integrity. TolB occupies a key intermediary position in the Tol-Pal system because it communicates directly with both membrane-embedded components, Pal in the outer membrane and TolA in the inner membrane. In Yersinia enterocolitica serotype O:8 / biotype 1B (strain NCTC 13174 / 8081), this protein is Tol-Pal system protein TolB.